Here is a 318-residue protein sequence, read N- to C-terminus: Malate dehydrogenase (318 aa).

NAD(+) contacts are provided by residues 10–15 (GAGNIG) and Asp34. Substrate-binding residues include Arg83 and Arg89. NAD(+)-binding positions include Asn96 and 119–121 (ITN). Positions 121 and 152 each coordinate substrate. His176 serves as the catalytic Proton acceptor.

Belongs to the LDH/MDH superfamily. MDH type 3 family.

It carries out the reaction (S)-malate + NAD(+) = oxaloacetate + NADH + H(+). Its function is as follows. Catalyzes the reversible oxidation of malate to oxaloacetate. The sequence is that of Malate dehydrogenase from Rhodospirillum rubrum (strain ATCC 11170 / ATH 1.1.1 / DSM 467 / LMG 4362 / NCIMB 8255 / S1).